The chain runs to 294 residues: 4-hydroxy-tetrahydrodipicolinate synthase (294 aa).

T47 is a binding site for pyruvate. The active-site Proton donor/acceptor is the Y136. K164 serves as the catalytic Schiff-base intermediate with substrate. A pyruvate-binding site is contributed by V206.

It belongs to the DapA family. Homotetramer; dimer of dimers.

Its subcellular location is the cytoplasm. The catalysed reaction is L-aspartate 4-semialdehyde + pyruvate = (2S,4S)-4-hydroxy-2,3,4,5-tetrahydrodipicolinate + H2O + H(+). Its pathway is amino-acid biosynthesis; L-lysine biosynthesis via DAP pathway; (S)-tetrahydrodipicolinate from L-aspartate: step 3/4. In terms of biological role, catalyzes the condensation of (S)-aspartate-beta-semialdehyde [(S)-ASA] and pyruvate to 4-hydroxy-tetrahydrodipicolinate (HTPA). The polypeptide is 4-hydroxy-tetrahydrodipicolinate synthase (Acaryochloris marina (strain MBIC 11017)).